The primary structure comprises 647 residues: 1-deoxy-D-xylulose-5-phosphate synthase (647 aa).

Thiamine diphosphate contacts are provided by residues His-72 and Gly-113–Ala-115. Asp-144 is a Mg(2+) binding site. Thiamine diphosphate-binding positions include Gly-145–Ala-146, Asn-174, Tyr-287, and Glu-370. Position 174 (Asn-174) interacts with Mg(2+).

It belongs to the transketolase family. DXPS subfamily. In terms of assembly, homodimer. The cofactor is Mg(2+). Requires thiamine diphosphate as cofactor.

The catalysed reaction is D-glyceraldehyde 3-phosphate + pyruvate + H(+) = 1-deoxy-D-xylulose 5-phosphate + CO2. The protein operates within metabolic intermediate biosynthesis; 1-deoxy-D-xylulose 5-phosphate biosynthesis; 1-deoxy-D-xylulose 5-phosphate from D-glyceraldehyde 3-phosphate and pyruvate: step 1/1. Catalyzes the acyloin condensation reaction between C atoms 2 and 3 of pyruvate and glyceraldehyde 3-phosphate to yield 1-deoxy-D-xylulose-5-phosphate (DXP). The protein is 1-deoxy-D-xylulose-5-phosphate synthase of Synechococcus sp. (strain WH7803).